A 601-amino-acid chain; its full sequence is RNA-binding protein MEX3B (601 aa).

2 disordered regions span residues 1-39 (MPSS…DDQR) and 90-109 (GRQG…ISPT). At Ser-4 the chain carries Phosphoserine. Gly residues predominate over residues 13 to 33 (GSGGGGGGGGGGGGGGSGGGE). KH domains are found at residues 98-159 (DGDR…RREI) and 192-253 (QTTI…REEI). Disordered regions lie at residues 284-332 (LHHG…TDSY) and 344-448 (TSRL…GGAS). The residue at position 320 (Ser-320) is a Phosphoserine. 2 stretches are compositionally biased toward low complexity: residues 320 to 331 (SSSSLGSASTDS) and 362 to 371 (NGNNNNNGNG). Pro residues predominate over residues 395 to 404 (DPAPAPPPGT). Over residues 420–442 (AAPVSSSCSSSASSSASSSSVVF) the composition is skewed to low complexity. At Ser-494 the chain carries Phosphoserine. Residues 514–546 (LPGLPSSDTSGSSSSSSSSSSSSSSSSGLRRKG) are disordered. Over residues 519–540 (SSDTSGSSSSSSSSSSSSSSSS) the composition is skewed to low complexity. The RING-type zinc-finger motif lies at 550 to 590 (CSVCFESEVIAALVPCGHNLFCMECANRICEKSEPECPVCH).

Post-translationally, phosphorylation at Ser-494 creates a docking site for 14-3-3, which stabilizes the protein and modulates its ability to bind RNA.

It localises to the cytoplasm. It is found in the nucleus. The protein localises to the P-body. Its subcellular location is the cytoplasmic granule. In terms of biological role, RNA-binding protein. May be involved in post-transcriptional regulatory mechanisms. The polypeptide is RNA-binding protein MEX3B (Mex3b) (Mus musculus (Mouse)).